Consider the following 421-residue polypeptide: Ankyrin repeat and SOCS box protein 6 (421 aa).

6 ANK repeats span residues 67 to 97 (EGVSNALLKMAELGLTRAADVLLRHGANLNF), 102 to 131 (TYYTALHIAVLRNQPDMVELLVHHGADVNR), 136 to 166 (HESSPLDLASEEPERLPCLQRLLDLGADVNA), 170 to 205 (HGKTALLHALASSDGVQIHNTENIRLLLEGGADVKA), 226 to 255 (GGDKEEAQMINRFCFQVTRLLLAHGADPSE), and 260 to 289 (ESLTHICLKSFKLHFPLLRFLLESGAAYNC). In terms of domain architecture, SOCS box spans 360–415 (ALHFSLRQLESYPPPLKHLCRVAIRLYLQPWPVDVKVKALPLPDRLKWYLLSEHSG).

The protein belongs to the ankyrin SOCS box (ASB) family. In terms of assembly, binds APS. Identified in a complex with ELOB and ELOC. Interacts with CUL5 and RNF7. Interacts with SQSTM1. Post-translationally, ubiquitinated by RNF41; leading to proteasomal degradation.

Its subcellular location is the cytoplasm. It participates in protein modification; protein ubiquitination. Its function is as follows. Probable substrate-recognition component of a SCF-like ECS (Elongin-Cullin-SOCS-box protein) E3 ubiquitin-protein ligase complex which mediates the ubiquitination and subsequent proteasomal degradation of target proteins. May play a role in the regulation of cell proliferation and autophagy by promoting the ubiquitination and degradation of SQSTM1. This is Ankyrin repeat and SOCS box protein 6 (ASB6) from Homo sapiens (Human).